A 451-amino-acid chain; its full sequence is CDP-diacylglycerol--serine O-phosphatidyltransferase PssA (451 aa).

PLD phosphodiesterase domains follow at residues 27 to 224 (VDFF…ELRD) and 239 to 451 (SVTP…SRIL). Leu56, Tyr57, Arg91, Arg94, Arg96, Ile97, Glu132, Ala133, Val136, His138, Lys140, Gly152, Tyr159, and Arg167 together coordinate a CDP-1,2-diacyl-sn-glycerol. His138 is a catalytic residue. Asp169 is a catalytic residue. The a CDP-1,2-diacyl-sn-glycerol site is built by Tyr273, Asp305, Phe306, Ile316, Ile317, Leu320, Leu323, and Tyr324. His357 is a catalytic residue. Positions 359, 374, and 378 each coordinate a CDP-1,2-diacyl-sn-glycerol. Glu385 is a catalytic residue. Residues Leu438, Ile447, Ile450, and Leu451 each contribute to the a CDP-1,2-diacyl-sn-glycerol site.

The protein belongs to the CDP-alcohol phosphatidyltransferase class-II family. In terms of assembly, multimeric. Interacts with ACP, YbgC and PlsB, forming altogether a complex at the inner membrane. Monomeric and dimeric; existing in equilibrium, but the monomer probably exhibits preferential membrane association.

It localises to the cytoplasm. Its subcellular location is the cell inner membrane. The catalysed reaction is a CDP-1,2-diacyl-sn-glycerol + L-serine = a 1,2-diacyl-sn-glycero-3-phospho-L-serine + CMP + H(+). Its pathway is phospholipid metabolism; phosphatidylethanolamine biosynthesis; phosphatidylethanolamine from CDP-diacylglycerol: step 1/2. Catalyzes the conversion of cytidine diphosphate diacylglycerol (CDP-DG) and L-serine into phosphatidylserine. Essential for biosynthesis of phosphatidylethanolamine, one of the major membrane phospholipids. Phosphatidylserine is later converted into phosphatidylethanolamine via the action of phosphatidylserine decarboxylase psd. Associates with the bacterial membrane for its role, which depends on the levels of anionic phospholipids in the membrane. This chain is CDP-diacylglycerol--serine O-phosphatidyltransferase PssA (pssA), found in Escherichia coli (strain K12).